The following is a 389-amino-acid chain: STE20-related kinase adapter protein alpha (389 aa).

Positions Tyr11–Phe321 constitute a Protein kinase domain.

It belongs to the protein kinase superfamily. STE Ser/Thr protein kinase family. STE20 subfamily. Component of a trimeric complex composed of STK11/LKB1, STRAD (STRADA or STRADB) and CAB39/MO25 (CAB39/MO25alpha or CAB39L/MO25beta): the complex tethers STK11/LKB1 in the cytoplasm and stimulates its catalytic activity. Expressed in brain, hypothalamus, heart and skeletal muscle.

It localises to the nucleus. It is found in the cytoplasm. Pseudokinase which, in complex with CAB39/MO25 (CAB39/MO25alpha or CAB39L/MO25beta), binds to and activates STK11/LKB1. Adopts a closed conformation typical of active protein kinases and binds STK11/LKB1 as a pseudosubstrate, promoting conformational change of STK11/LKB1 in an active conformation. The polypeptide is STE20-related kinase adapter protein alpha (STRADA) (Gallus gallus (Chicken)).